Consider the following 133-residue polypeptide: UPF0102 protein Anae109_1947 (133 aa).

It belongs to the UPF0102 family.

The protein is UPF0102 protein Anae109_1947 of Anaeromyxobacter sp. (strain Fw109-5).